The following is a 91-amino-acid chain: UPF0250 protein PP_4802 (91 aa).

It belongs to the UPF0250 family.

The protein is UPF0250 protein PP_4802 of Pseudomonas putida (strain ATCC 47054 / DSM 6125 / CFBP 8728 / NCIMB 11950 / KT2440).